Here is a 721-residue protein sequence, read N- to C-terminus: Angiomotin-like 2a (721 aa).

A disordered region spans residues 35–84 (QQALRGGSSGGGAGSPRSSLESLTQEESLSPQLSARQEPQGQEHQGDFQH). Over residues 49–68 (SPRSSLESLTQEESLSPQLS) the composition is skewed to low complexity. At Tyr-103 the chain carries Phosphotyrosine; by FGFR1. Positions 169–214 (DNIPMSSSHSYPQLSNNHSDTVVNEQSVHQPDQRGPPPEYPFMVRS) are disordered. Over residues 172–198 (PMSSSHSYPQLSNNHSDTVVNEQSVHQ) the composition is skewed to polar residues. Residues 275–531 (ANNFQMEQLI…TRWEQKYLEE (257 aa)) are a coiled coil. Over residues 554-567 (INHSPRNSPNSSFN) the composition is skewed to polar residues. Disordered stretches follow at residues 554–575 (INHSPRNSPNSSFNEDLPSPNH) and 666–709 (DSST…TQIS). Over residues 688–702 (SAPEPSTASSSESTS) the composition is skewed to low complexity. A PDZ-binding motif is present at residues 718–721 (EILI).

Belongs to the angiomotin family. Interacts with SRC. Post-translationally, phosphorylation at Tyr-103 is necessary for efficient binding to SRC and synergistically functioning with SRC to activate the downstream MAPK pathway. In terms of tissue distribution, expressed in endothelial cells.

The protein resides in the recycling endosome. Its subcellular location is the cytoplasm. It is found in the cell projection. It localises to the podosome. The protein localises to the cell junction. Functionally, required for proper architecture of actin filaments and for cell movements during embryogenesis. Plays a role in the radial actin fiber architecture in skin epithelial cells, thereby maintains cell geometry, size and cell interconnectivity within the skin. Plays an important role in coupling actin fibers to cell junctions in endothelial cells and is therefore required for correct endothelial cell morphology and maintenance of dorsal aorta lumen expansion during embryogenesis. May further play a role in the polarity, proliferation and migration of endothelial cells, and therefore participates in angiogenesis. Inhibits the Wnt/beta-catenin signaling pathway, probably by recruiting CTNNB1 to recycling endosomes and hence preventing its translocation to the nucleus. Regulates the translocation of phosphorylated SRC to peripheral cell-matrix adhesion sites. Selectively promotes FGF-induced MAPK activation through SRC. This chain is Angiomotin-like 2a (amotl2a), found in Danio rerio (Zebrafish).